Consider the following 2629-residue polypeptide: Telomerase protein component 1 (2629 aa).

4 TEP1 N-terminal repeats span residues 1–30 (MEKL…DLQP), 31–60 (LEKI…DLQP), 61–90 (TERI…DLQP), and 91–120 (LEKL…TVKS). The 459-residue stretch at 227–685 (LKLTSGDSGF…VKHNLSPMPG (459 aa)) folds into the TROVE domain. The span at 386–397 (PRKHRSKRRSRQ) shows a compositional bias: basic residues. Positions 386 to 412 (PRKHRSKRRSRQPPRPQKTERPFSERG) are disordered. Over residues 402–412 (QKTERPFSERG) the composition is skewed to basic and acidic residues. In terms of domain architecture, NACHT spans 1171–1578 (RLSLVTGQAG…EFLTNLHVVA (408 aa)). 1177-1184 (GQAGQGKT) is a binding site for ATP. WD repeat units follow at residues 1420-1462 (VLPQ…EVLA), 1681-1720 (TMSS…EEKA), 1723-1761 (SGCD…WVFQ), 1764-1803 (AHQY…LAFQ), 1805-1844 (THPK…VTKE), 1847-1886 (APGP…RLAA), 1889-1930 (AQCG…GCLG), 1932-1971 (LPLS…QGPQ), 1974-2013 (ELNV…HSLW), 2015-2054 (LSRY…QPHV), 2067-2106 (GHEG…APLL), 2113-2151 (CHRD…QLGQ), 2154-2191 (GHQS…LTSI), 2193-2241 (AHSG…QIRT), 2244-2282 (GHSG…DDSY), 2285-2324 (RSSV…ATAQ), 2326-2362 (PGRV…GSTS), 2375-2424 (EDWG…SSIL), 2467-2507 (PNGS…GEWI), 2555-2592 (IHLG…LLGL), and 2594-2628 (RCEG…FLSW).

In terms of assembly, associated component of the telomerase holoenzyme complex. Component of the vault ribonucleoprotein particle, at least composed of MVP, PARP4 and one or more vault RNAs (vRNAs). Binds to VAULTRC1, VAULTRC2 and VAULTRC4/hvg4 vRNAs. Ubiquitous.

The protein resides in the nucleus. Its subcellular location is the chromosome. It is found in the telomere. Component of the telomerase ribonucleoprotein complex that is essential for the replication of chromosome termini. Also a component of the ribonucleoprotein vaults particle, a multi-subunit structure involved in nucleo-cytoplasmic transport. Responsible for the localizing and stabilizing vault RNA (vRNA) association in the vault ribonucleoprotein particle. The chain is Telomerase protein component 1 (Tep1) from Mus musculus (Mouse).